Reading from the N-terminus, the 320-residue chain is Ferrochelatase (320 aa).

Residues H194 and E275 each contribute to the Fe cation site.

This sequence belongs to the ferrochelatase family. As to quaternary structure, monomer.

The protein localises to the cytoplasm. It catalyses the reaction heme b + 2 H(+) = protoporphyrin IX + Fe(2+). The protein operates within porphyrin-containing compound metabolism; protoheme biosynthesis; protoheme from protoporphyrin-IX: step 1/1. Its function is as follows. Catalyzes the ferrous insertion into protoporphyrin IX. The polypeptide is Ferrochelatase (Salmonella typhi).